The following is a 37-amino-acid chain: Large ribosomal subunit protein bL36c (37 aa).

The protein belongs to the bacterial ribosomal protein bL36 family.

The protein localises to the plastid. It is found in the chloroplast. The polypeptide is Large ribosomal subunit protein bL36c (Lotus japonicus (Lotus corniculatus var. japonicus)).